The primary structure comprises 935 residues: Kinesin heavy chain (935 aa).

The Kinesin motor domain occupies 5–329 (NIKVVCRFRP…LRFGARAKSI (325 aa)). ATP-binding positions include 87–94 (GQTGSGKT) and 237–244 (GSEKVGKT). Residues 342 to 887 (AELKALLKKV…SQKSQNSLAA (546 aa)) adopt a coiled-coil conformation. Disordered stretches follow at residues 400–419 (APGF…TPVP) and 898–935 (RGNG…MNSR).

Belongs to the TRAFAC class myosin-kinesin ATPase superfamily. Kinesin family. Kinesin subfamily.

The protein resides in the cytoplasm. It is found in the cytoskeleton. Kinesin is a microtubule-associated force-producing protein that may play a role in organelle transport. Its motor activity is directed toward the microtubule's plus end. The speed of this motor is 4-5 times faster than its animal counterparts. This chain is Kinesin heavy chain, found in Syncephalastrum racemosum (Filamentous fungus).